A 373-amino-acid polypeptide reads, in one-letter code: ATP phosphoribosyltransferase regulatory subunit (373 aa).

The protein belongs to the class-II aminoacyl-tRNA synthetase family. HisZ subfamily. As to quaternary structure, heteromultimer composed of HisG and HisZ subunits.

The protein localises to the cytoplasm. Its pathway is amino-acid biosynthesis; L-histidine biosynthesis; L-histidine from 5-phospho-alpha-D-ribose 1-diphosphate: step 1/9. Required for the first step of histidine biosynthesis. May allow the feedback regulation of ATP phosphoribosyltransferase activity by histidine. The sequence is that of ATP phosphoribosyltransferase regulatory subunit from Rhizobium etli (strain CIAT 652).